The following is a 1511-amino-acid chain: Bifunctional glutamate/proline--tRNA ligase (1511 aa).

Positions 164-758 (GTKWDVSENK…SSVLYNRVAA (595 aa)) are glutamate--tRNA ligase. Residues 204–214 (PEASGYLHIGH) carry the 'HIGH' region motif. The tract at residues 296–315 (AEQMKAEREQRAESKHRQNS) is disordered. A compositionally biased stretch (basic and acidic residues) spans 299-315 (MKAEREQRAESKHRQNS). Position 300 is an N6-acetyllysine; alternate (lysine 300). Lysine 300 is modified (N6-malonyllysine; alternate). The residue at position 355 (threonine 355) is a Phosphothreonine. N6-acetyllysine is present on lysine 417. Positions 432 to 436 (VLSKR) match the 'KMSKS' region motif. A Phosphoserine modification is found at serine 434. N6-acetyllysine is present on residues lysine 498, lysine 535, lysine 542, and lysine 637. Positions 708–728 (KEMPTSGSKEKTKAEPLKKET) are enriched in basic and acidic residues. Residues 708-741 (KEMPTSGSKEKTKAEPLKKETSSAPKEGPVPAVS) form a disordered region. A Phosphoserine modification is found at serine 746. The 57-residue stretch at 748–804 (ESSVLYNRVAAQGDVVRELKAKKAAKEDVDAAVKQLLALKAEYKQKTGQEYKPGNPP) folds into the WHEP-TRS 1 domain. Positions 759–955 (QGDVVRELKA…GIEYKPVSAT (197 aa)) are 3 X 57 AA approximate repeats. Lysine 787 bears the N6-acetyllysine mark. Residues 794-823 (TGQEYKPGNPPSAAAQSASTKSLPSAGEDR) form a disordered region. Positions 807–816 (AAQSASTKSL) are enriched in polar residues. The region spanning 821–877 (EDRSLYDKIAAQGEVVRKLKAEKAPKAKVTEAVECLLSLKAEYKEKTGKEYVPGQPP) is the WHEP-TRS 2 domain. Lysine 860 bears the N6-acetyllysine mark. Disordered regions lie at residues 868-903 (GKEYVPGQPPASQKSQPSPASKAEPAGPETTEAKAL) and 952-1015 (VSAT…RLGL). Residue tyrosine 871 is modified to Phosphotyrosine. The segment covering 877–890 (PASQKSQPSPASKA) has biased composition (low complexity). The residue at position 885 (serine 885) is a Phosphoserine; by CDK5. Threonine 897 is subject to Phosphothreonine. Positions 899–955 (EAKALFDRVACQGEVVRKLKAEKASKDQVDPAVQELLQLKAQYKSLTGIEYKPVSAT) constitute a WHEP-TRS 3 domain. Basic and acidic residues predominate over residues 957–975 (SEDKDKKKKEKENKSEKQN). Over residues 992 to 1005 (QGGGLSSSGAGEGQ) the composition is skewed to gly residues. Serine 997 bears the Phosphoserine mark. Position 998 is a phosphoserine; by RPS6KB1 (serine 998). Position 999 is a phosphoserine (serine 999). The segment at 1006 to 1511 (GPKKQTRLGL…KFYTLFGRSY (506 aa)) is proline--tRNA ligase. Residues 1120 to 1122 (TSE) and arginine 1151 each bind L-proline. The ATP site is built by arginine 1151, glutamate 1153, arginine 1162, threonine 1163, glutamine 1236, and threonine 1239. An Omega-N-methylarginine modification is found at arginine 1151. Glutamine 1236 contributes to the Mg(2+) binding site. Histidine 1241 provides a ligand contact to L-proline. Residues threonine 1275 and arginine 1277 each coordinate ATP. Serine 1349 bears the Phosphoserine mark. The Zn(2+) site is built by cysteine 1447, cysteine 1452, cysteine 1494, and cysteine 1496. Lysine 1502 carries the N6-acetyllysine modification.

It in the N-terminal section; belongs to the class-I aminoacyl-tRNA synthetase family. Glutamate--tRNA ligase type 2 subfamily. This sequence in the C-terminal section; belongs to the class-II aminoacyl-tRNA synthetase family. In terms of assembly, homodimer. Part of the aminoacyl-tRNA synthetase multienzyme complex, also know as multisynthetase complex, that is composed of the tRNA ligases for Arg (RARS1), Asp (DARS1), Gln (QARS1), Ile (IARS1), Leu (LARS1), Lys (KARS1), Met (MARS1) the bifunctional ligase for Glu and Pro (EPRS1) and the auxiliary subunits AIMP1/p43, AIMP2/p38 and EEF1E1/p18. Forms a linear complex that contains MARS1, EEF1E1, EPRS1 and AIMP2 that is at the core of the multisubunit complex. Interacts with TARS3. Interacts with DUS2L. Component of the GAIT complex which is composed of EPRS1, RPL13A and GAPDH. Interacts (phosphorylated at Ser-998) with SLC27A1; mediates the translocation of SLC27A1 from the cytoplasm to the plasma membrane thereby increasing the uptake of long-chain fatty acids. Phosphorylated at Ser-998 by RPS6KB1; triggers EPRS1 release from the aminoacyl-tRNA synthetase multienzyme complex. In monocytes, the IFN-gamma-induced phosphorylation at Ser-998 releases EPRS1 from the aminoacyl-tRNA synthetase multienzyme complex, allowing its association with the GAIT complex. Phosphorylation at Ser-998 is specifically required for the RPL13A-mediated interaction of the GAIT complex with eIF4G. Phosphorylation at Ser-998 by RPS6KB1, is also induced by insulin through activation of the mTORC1 signaling pathway and promotes the interaction of EPRS1 with SLC27A1.

The protein resides in the cytoplasm. The protein localises to the cytosol. Its subcellular location is the membrane. It catalyses the reaction tRNA(Glu) + L-glutamate + ATP = L-glutamyl-tRNA(Glu) + AMP + diphosphate. The catalysed reaction is tRNA(Pro) + L-proline + ATP = L-prolyl-tRNA(Pro) + AMP + diphosphate. Functionally, multifunctional protein which primarily functions within the aminoacyl-tRNA synthetase multienzyme complex, also known as multisynthetase complex. Within the complex it catalyzes the attachment of both L-glutamate and L-proline to their cognate tRNAs in a two-step reaction where the amino acid is first activated by ATP to form a covalent intermediate with AMP. Subsequently, the activated amino acid is transferred to the acceptor end of the cognate tRNA to form L-glutamyl-tRNA(Glu) and L-prolyl-tRNA(Pro). Upon interferon-gamma stimulation, EPRS1 undergoes phosphorylation, causing its dissociation from the aminoacyl-tRNA synthetase multienzyme complex. It is recruited to form the GAIT complex, which binds to stem loop-containing GAIT elements found in the 3'-UTR of various inflammatory mRNAs, such as ceruloplasmin. The GAIT complex inhibits the translation of these mRNAs, allowing interferon-gamma to redirect the function of EPRS1 from protein synthesis to translation inhibition in specific cell contexts. Furthermore, it can function as a downstream effector in the mTORC1 signaling pathway, by promoting the translocation of SLC27A1 from the cytoplasm to the plasma membrane where it mediates the uptake of long-chain fatty acid by adipocytes. Thereby, EPRS1 also plays a role in fat metabolism and more indirectly influences lifespan. The sequence is that of Bifunctional glutamate/proline--tRNA ligase from Cricetulus griseus (Chinese hamster).